The following is a 413-amino-acid chain: NADPH dehydrogenase afvA (413 aa).

53-56 is a binding site for FMN; the sequence is APLC. Tyrosine 58 provides a ligand contact to substrate. Residues alanine 88 and glutamine 130 each coordinate FMN. 211 to 214 lines the substrate pocket; it reads HAAH. Residues arginine 264 and 370–371 each bind FMN; that span reads GR.

It belongs to the NADH:flavin oxidoreductase/NADH oxidase family. NamA subfamily. The cofactor is FMN.

It carries out the reaction A + NADPH + H(+) = AH2 + NADP(+). Its pathway is secondary metabolite biosynthesis. Functionally, NADPH dehydrogenase; part of the gene cluster that mediates the biosynthesis of aflavarin, a bicoumarin that exhibits anti-insectan activity against the fungivorous beetle C.hemipterus. This is NADPH dehydrogenase afvA from Aspergillus flavus (strain ATCC 200026 / FGSC A1120 / IAM 13836 / NRRL 3357 / JCM 12722 / SRRC 167).